We begin with the raw amino-acid sequence, 135 residues long: Large-conductance mechanosensitive channel (135 aa).

2 consecutive transmembrane segments (helical) span residues 10-30 and 76-96; these read FAMR…AAFG and GVFI…FLAI.

It belongs to the MscL family. In terms of assembly, homopentamer.

The protein resides in the cell inner membrane. Channel that opens in response to stretch forces in the membrane lipid bilayer. May participate in the regulation of osmotic pressure changes within the cell. This Cronobacter sakazakii (strain ATCC BAA-894) (Enterobacter sakazakii) protein is Large-conductance mechanosensitive channel.